We begin with the raw amino-acid sequence, 300 residues long: Putative S-adenosyl-L-methionine-dependent methyltransferase MAB_4328c (300 aa).

S-adenosyl-L-methionine-binding positions include Asp126 and 155-156 (DL).

This sequence belongs to the UPF0677 family.

Functionally, exhibits S-adenosyl-L-methionine-dependent methyltransferase activity. The sequence is that of Putative S-adenosyl-L-methionine-dependent methyltransferase MAB_4328c from Mycobacteroides abscessus (strain ATCC 19977 / DSM 44196 / CCUG 20993 / CIP 104536 / JCM 13569 / NCTC 13031 / TMC 1543 / L948) (Mycobacterium abscessus).